Consider the following 1043-residue polypeptide: RNA cytidine acetyltransferase (1043 aa).

ATP contacts are provided by residues 285-294 and Arg-462; that span reads GRGKSAAVGL. The region spanning 551–736 is the N-acetyltransferase domain; the sequence is VLMAPIDKSR…VPVYIRQNSN (186 aa). Acetyl-CoA is bound by residues 622-624, 629-635, and Arg-723; these read VAV and QSMGYGG. The segment at 1020–1043 is disordered; that stretch reads IPDAKDPANKNAKKKKRFSSGGRR. Residues 1030–1043 show a composition bias toward basic residues; the sequence is NAKKKKRFSSGGRR.

This sequence belongs to the RNA cytidine acetyltransferase family. NAT10 subfamily. As to quaternary structure, part of the small subunit (SSU) processome, composed of more than 70 proteins and the RNA chaperone small nucleolar RNA (snoRNA) U3.

It localises to the nucleus. The protein localises to the nucleolus. The catalysed reaction is a cytidine in 18S rRNA + acetyl-CoA + ATP + H2O = an N(4)-acetylcytidine in 18S rRNA + ADP + phosphate + CoA + H(+). It carries out the reaction a cytidine in tRNA + acetyl-CoA + ATP + H2O = an N(4)-acetylcytidine in tRNA + ADP + phosphate + CoA + H(+). RNA cytidine acetyltransferase with specificity toward both 18S rRNA and tRNAs. Catalyzes the formation of N(4)-acetylcytidine (ac4C) in 18S rRNA. Required for early nucleolar cleavages of precursor rRNA at sites A0, A1 and A2 during 18S rRNA synthesis. Catalyzes the formation of ac4C in serine and leucine tRNAs. Requires a tRNA-binding adapter protein for full tRNA acetyltransferase activity but not for 18S rRNA acetylation. Part of the small subunit (SSU) processome, first precursor of the small eukaryotic ribosomal subunit. During the assembly of the SSU processome in the nucleolus, many ribosome biogenesis factors, an RNA chaperone and ribosomal proteins associate with the nascent pre-rRNA and work in concert to generate RNA folding, modifications, rearrangements and cleavage as well as targeted degradation of pre-ribosomal RNA by the RNA exosome. The protein is RNA cytidine acetyltransferase of Caenorhabditis elegans.